Here is a 210-residue protein sequence, read N- to C-terminus: MSRKHLTARQQEIFDFVKHHIETTGMPPTRVEIAREIGFKSPNAAEEHLKALARKGYIEMLSGTSRGIRILVDNEETAANDDGLPLIGKVAAGTPIMAIEHVESHYPVNGAMFNPNADYLLKVNGNSMEKIGILDGDLLAVHKTNFARNGQVVVARVDDEVTVKRLEKKGDLIYLHPENDELQPIIVDPRIEYIEIEGIAVGVIRNNAWM.

Residues 30 to 50 constitute a DNA-binding region (H-T-H motif); it reads RVEIAREIGFKSPNAAEEHLK. Active-site for autocatalytic cleavage activity residues include S127 and K164.

This sequence belongs to the peptidase S24 family. In terms of assembly, homodimer.

The enzyme catalyses Hydrolysis of Ala-|-Gly bond in repressor LexA.. Represses a number of genes involved in the response to DNA damage (SOS response), including recA and lexA. In the presence of single-stranded DNA, RecA interacts with LexA causing an autocatalytic cleavage which disrupts the DNA-binding part of LexA, leading to derepression of the SOS regulon and eventually DNA repair. This is LexA repressor from Actinobacillus pleuropneumoniae serotype 5b (strain L20).